The following is a 275-amino-acid chain: MEVQKLPDQSLISSMMLDSRCGLNDLYPIARLTQKMEDALTVSGKPAACPVDQDCPYTIELIQPEDGEAVIAMLKTFFFKDEPLNTFLDLGECKELEKYSLKPLPDNCSYKAVNKKGEIIGVFLNGLMRRPSPDDVPEKAADSCEHPKFKKILSLMDHVEEQFNIFDVYPDEELILDGKILSVDTNYRGLGIAGRLTERAYEYMRENGINVYHVLCSSHYSARVMEKLGFHEVFRMQFADYKPQGEVVFKPAAPHVGIQVMAKEVGPAKAAQTKL.

Residues 181–183 (LSV) and 189–193 (GLGIA) each bind acetyl-CoA. One can recognise an N-acetyltransferase domain in the interval 181-254 (LSVDTNYRGL…GEVVFKPAAP (74 aa)).

The protein belongs to the acetyltransferase family. AANAT subfamily. In terms of tissue distribution, in the adult, expressed in the midgut portion of the thoracic segments and the frontal half of the abdomen (at protein level). Expressed in the epithelial cell layer facing the lumen of the gut (at protein level). In the brain, expressed in a sub-populations of neurons and astrocytes, and in a set of distinct stripes in the optic lobes (at protein level). Expressed mainly in serotonergic neurons but also in subsets of glutamatergic, GABAergic and cholinergic neurons (at protein level).

Its subcellular location is the cytoplasm. It localises to the nucleus. It catalyses the reaction a 2-arylethylamine + acetyl-CoA = an N-acetyl-2-arylethylamine + CoA + H(+). The catalysed reaction is serotonin + acetyl-CoA = N-acetylserotonin + CoA + H(+). The enzyme catalyses dopamine + acetyl-CoA = N-acetyldopamine + CoA + H(+). It carries out the reaction tyramine + acetyl-CoA = N-acetyltyramine + CoA + H(+). It catalyses the reaction octopamine + acetyl-CoA = N-acetyloctopamine + CoA + H(+). The catalysed reaction is 5-methoxytryptamine + acetyl-CoA = melatonin + CoA + H(+). The enzyme catalyses 2-phenylethylamine + acetyl-CoA = N-(2-phenylethyl)acetamide + CoA + H(+). It carries out the reaction noradrenaline + acetyl-CoA = N-acetylnoradrenaline + CoA + H(+). It catalyses the reaction tyramine + butanoyl-CoA = N-butanoyltyramine + CoA + H(+). The catalysed reaction is tyramine + hexanoyl-CoA = N-hexanoyltyramine + CoA + H(+). The enzyme catalyses tryptamine + acetyl-CoA = N-acetyltryptamine + CoA + H(+). It carries out the reaction dopamine + hexadecanoyl-CoA = N-hexadecanoyl-dopamine + CoA + H(+). It catalyses the reaction dopamine + (9Z)-octadecenoyl-CoA = N-(9Z-octadecanoyl)-dopamine + CoA + H(+). The catalysed reaction is serotonin + hexadecanoyl-CoA = N-hexadecanoyl-serotonin + CoA + H(+). The enzyme catalyses serotonin + (9Z)-octadecenoyl-CoA = N-(9Z-octadecenoyl)-serotonin + CoA + H(+). It carries out the reaction serotonin + octadecanoyl-CoA = N-octadecanoyl-serotonin + CoA + H(+). It catalyses the reaction serotonin + (5Z,8Z,11Z,14Z)-eicosatetraenoyl-CoA = N-[(5Z,8Z,11Z,14Z)-eicosatetraenoyl]-serotonin + CoA + H(+). The protein operates within aromatic compound metabolism; melatonin biosynthesis; melatonin from serotonin: step 1/2. Inhibited by long-chain acyl-CoA thioesters, oleoyl-CoA (an analog of acetyl-CoA) and tyrosol (an analog of tyramine). Its function is as follows. Catalyzes N-acetylation of tryptamine, tyramine, dopamine, serotonin and octopamine. In astrocytes, regulates sleep homeostasis by limiting the accumulation of serotonin and dopamine in the brain upon sleep deprivation. Is not essential for sclerotization. This Drosophila melanogaster (Fruit fly) protein is Arylalkylamine N-acetyltransferase 1.